Here is a 749-residue protein sequence, read N- to C-terminus: Disintegrin and metalloproteinase domain-containing protein 10 (749 aa).

Residues 1–18 (MVLPTVLILLLSWAAGLG) form the signal peptide. The propeptide occupies 19 to 214 (GQYGNPLNKY…MGPELLRKKR (196 aa)). The Cysteine switch motif lies at 171–178 (GGCADHSV). Cys-173 contributes to the Zn(2+) binding site. Topologically, residues 215-673 (TTLAERNTCQ…SPQLYENIAE (459 aa)) are extracellular. Residues 221-457 (NTCQLYIQTD…KRNNCFVESG (237 aa)) enclose the Peptidase M12B domain. 17 disulfide bridges follow: Cys-223–Cys-314, Cys-345–Cys-452, Cys-400–Cys-436, Cys-461–Cys-496, Cys-472–Cys-485, Cys-474–Cys-480, Cys-484–Cys-516, Cys-504–Cys-512, Cys-511–Cys-537, Cys-525–Cys-544, Cys-531–Cys-563, Cys-556–Cys-568, Cys-573–Cys-599, Cys-581–Cys-608, Cys-583–Cys-598, Cys-595–Cys-640, and Cys-633–Cys-646. Residues Asn-268 and Asn-279 are each glycosylated (N-linked (GlcNAc...) asparagine). His-384 is a Zn(2+) binding site. Glu-385 is an active-site residue. Residues His-388 and His-394 each coordinate Zn(2+). Asn-440 carries an N-linked (GlcNAc...) asparagine glycan. One can recognise a Disintegrin domain in the interval 458–552 (QPICGNGMVE…LCPASDPKPN (95 aa)). Asn-552 carries N-linked (GlcNAc...) asparagine glycosylation. The chain crosses the membrane as a helical span at residues 674–697 (WIVAHWWAVLLMGIALIMLMAGFI). Topologically, residues 698 to 749 (KICSVHTPSSNPKLPPPKPLPGTLKRRRPPQPIQQPPRQRPRESYQMGHMRR) are cytoplasmic. Residues 705 to 749 (PSSNPKLPPPKPLPGTLKRRRPPQPIQQPPRQRPRESYQMGHMRR) form a disordered region. Positions 709–716 (PKLPPPKP) match the SH3-binding motif. The residue at position 720 (Thr-720) is a Phosphothreonine. Positions 723–729 (RRRPPQP) match the SH3-binding motif. The interval 735-749 (RQRPRESYQMGHMRR) is interaction with AP2A1, AP2A2 and AP2M1.

Forms a ternary EFNA5-EPHA3-ADAM10 complex mediating EFNA5 extracellular domain shedding by ADAM10 which regulates the EFNA5-EPHA3 complex internalization and function, the cleavage occurs in trans, with ADAM10 and its substrate being on the membranes of opposing cells. Interacts with the clathrin adapter AP2 complex subunits AP2A1, AP2A2, AP2B1, and AP2M1; this interaction facilitates ADAM10 endocytosis from the plasma membrane during long-term potentiation in hippocampal neurons. Forms a ternary complex composed of ADAM10, EPHA4 and CADH1; within the complex, ADAM10 cleaves CADH1 which disrupts adherens junctions. Interacts with EPHA2. Interacts with NGF in a divalent cation-dependent manner. Interacts with TSPAN14; the interaction promotes ADAM10 maturation and cell surface expression. Interacts with TSPAN5, TSPAN10, TSPAN14, TSPAN15, TSPAN17 and TSPAN33; these interactions regulate ADAM10 substrate specificity, endocytosis and turnover. Interacts (via extracellular domain) with TSPAN33 (via extracellular domain) and (via cytoplasmic domain) with AFDN; interaction with TSPAN33 allows the docking of ADAM10 to zonula adherens through a PDZ11-dependent interaction between TSPAN33 and PLEKHA7 while interaction with AFDN locks ADAM10 at zonula adherens. Interacts with DLG1; this interaction recruits ADAM10 to the cell membrane during long-term depression in hippocampal neurons. Interacts (via extracellular domain) with BACE1 (via extracellular domain). Interacts with FAM171A1. It depends on Zn(2+) as a cofactor. The precursor is cleaved by furin and PCSK7. In terms of tissue distribution, expressed in brain, kidney, lung, spleen, ovary and testis.

It is found in the cell membrane. Its subcellular location is the golgi apparatus membrane. The protein localises to the cytoplasmic vesicle. The protein resides in the clathrin-coated vesicle. It localises to the cell projection. It is found in the axon. Its subcellular location is the dendrite. The protein localises to the cell junction. The protein resides in the adherens junction. It localises to the cytoplasm. The enzyme catalyses Endopeptidase of broad specificity.. Catalytically inactive when the propeptide is intact and associated with the mature enzyme. The disintegrin and cysteine-rich regions modulate access of substrates to exerts an inhibitory effect on the cleavage of ADAM10 substrates. Its function is as follows. Transmembrane metalloprotease which mediates the ectodomain shedding of a myriad of transmembrane proteins, including adhesion proteins, growth factor precursors and cytokines being essential for development and tissue homeostasis. Associates with six members of the tetraspanin superfamily TspanC8 which regulate its exit from the endoplasmic reticulum and its substrate selectivity. Cleaves the membrane-bound precursor of TNF-alpha at '76-Ala-|-Val-77' to its mature soluble form. Responsible for the proteolytical release of soluble JAM3 from endothelial cells surface. Responsible for the proteolytic release of several other cell-surface proteins, including heparin-binding epidermal growth-like factor, ephrin-A2, CD44, CDH2 and for constitutive and regulated alpha-secretase cleavage of amyloid precursor protein (APP). Contributes to the normal cleavage of the cellular prion protein. Involved in the cleavage of the adhesion molecule L1 at the cell surface and in released membrane vesicles, suggesting a vesicle-based protease activity. Also controls the proteolytic processing of Notch and mediates lateral inhibition during neurogenesis. Required for the development of type 1 transitional B cells into marginal zone B cells, probably by cleaving Notch. Responsible for the FasL ectodomain shedding and for the generation of the remnant ADAM10-processed FasL (FasL APL) transmembrane form. Also cleaves the ectodomain of the integral membrane proteins CORIN and ITM2B. Mediates the proteolytic cleavage of LAG3, leading to release the secreted form of LAG3. Mediates the proteolytic cleavage of IL6R and IL11RA, leading to the release of secreted forms of IL6R and IL11RA. Enhances the cleavage of CHL1 by BACE1. Cleaves NRCAM. Cleaves TREM2, resulting in shedding of the TREM2 ectodomain. Involved in the development and maturation of glomerular and coronary vasculature. During development of the cochlear organ of Corti, promotes pillar cell separation by forming a ternary complex with CADH1 and EPHA4 and cleaving CADH1 at adherens junctions. May regulate the EFNA5-EPHA3 signaling. Regulates leukocyte transmigration as a sheddase for the adherens junction protein VE-cadherin/CDH5 in endothelial cells. The polypeptide is Disintegrin and metalloproteinase domain-containing protein 10 (Adam10) (Rattus norvegicus (Rat)).